The chain runs to 141 residues: Anthrone oxygenase ptaC (141 aa).

An N-terminal signal peptide occupies residues 1–19 (MMGLPLMAVPMLLDTGADP). Helical transmembrane passes span 33–53 (GVRT…WTII) and 64–84 (ILAV…YVLA).

It belongs to the anthrone oxygenase family.

It is found in the membrane. Its pathway is secondary metabolite biosynthesis. Its function is as follows. Anthrone oxygenase; part of the gene cluster that mediates the biosynthesis of pestheic acid, a diphenyl ether which is a biosynthetic precursor of the unique chloropupukeananes. The biosynthesis initiates from condensation of acetate and malonate units catalyzed by the non-reducing PKS ptaA. As the ptaA protein is TE/CLC domain-deficient, hydrolysis and Claisen cyclization of the polyketide could be catalyzed by ptaB containing a beta-lactamase domain. The ptaB protein might hydrolyze the thioester bond between the ACP of ptaA and the intermediate to release atrochrysone carboxylic acid, which is spontaneously dehydrated to form endocrocin anthrone. Endocrocin anthrone is then converted to endocrocin, catalyzed by the anthrone oxygenase ptaC. Spontaneous decarboxylation of endocrocin occurs to generate emodin. An O-methyltransferase (ptaH or ptaI) could methylate emodin to form physcion. PtaJ could then catalyze the oxidative cleavage of physcion, and rotation of the intermediate could then afford desmethylisosulochrin. PtaF, a putative NADH-dependent oxidoreductase, might also participate in the oxidative cleavage step. Desmethylisosulochrin is then transformed by another O-methyltransferase (ptaH or ptaI) to form isosulochrin. Chlorination of isosulochrin by ptaM in the cyclohexadienone B ring then produces chloroisosulochrin. PtaE is responsible for the oxidative coupling reactions of both benzophenones isosulochrin and chloroisosulochrin to RES-1214-1 and pestheic acid respectively, regardless of chlorination. This chain is Anthrone oxygenase ptaC, found in Pestalotiopsis fici (strain W106-1 / CGMCC3.15140).